The following is a 176-amino-acid chain: Large ribosomal subunit protein uL6 (176 aa).

It belongs to the universal ribosomal protein uL6 family. Part of the 50S ribosomal subunit.

This protein binds to the 23S rRNA, and is important in its secondary structure. It is located near the subunit interface in the base of the L7/L12 stalk, and near the tRNA binding site of the peptidyltransferase center. This chain is Large ribosomal subunit protein uL6, found in Thiobacillus denitrificans (strain ATCC 25259 / T1).